The following is a 526-amino-acid chain: Peptide chain release factor 3 (526 aa).

One can recognise a tr-type G domain in the interval 9–277; the sequence is DKRRTFAIIS…GIVEWAPKPL (269 aa). GTP is bound by residues 18–25, 86–90, and 140–143; these read SHPDAGKT, DTPGH, and NKLD.

This sequence belongs to the TRAFAC class translation factor GTPase superfamily. Classic translation factor GTPase family. PrfC subfamily.

It localises to the cytoplasm. In terms of biological role, increases the formation of ribosomal termination complexes and stimulates activities of RF-1 and RF-2. It binds guanine nucleotides and has strong preference for UGA stop codons. It may interact directly with the ribosome. The stimulation of RF-1 and RF-2 is significantly reduced by GTP and GDP, but not by GMP. This chain is Peptide chain release factor 3, found in Shewanella baltica (strain OS223).